The sequence spans 489 residues: Cysteine--tRNA ligase (489 aa).

Cysteine 27 lines the Zn(2+) pocket. A 'HIGH' region motif is present at residues 29–39 (VTVYDLCHLGH). The Zn(2+) site is built by cysteine 211, histidine 236, and glutamate 240. The 'KMSKS' region motif lies at 268-272 (KMSKS). Position 271 (lysine 271) interacts with ATP.

This sequence belongs to the class-I aminoacyl-tRNA synthetase family. Monomer. It depends on Zn(2+) as a cofactor.

Its subcellular location is the cytoplasm. The catalysed reaction is tRNA(Cys) + L-cysteine + ATP = L-cysteinyl-tRNA(Cys) + AMP + diphosphate. The polypeptide is Cysteine--tRNA ligase (Prochlorococcus marinus (strain AS9601)).